We begin with the raw amino-acid sequence, 626 residues long: MTKQEKAINLSESAQVDQQSVQPFPRSRKVYVEGSRPDIRVPMREISLDDTPTDFGGESNAPVLVYDTSGPYTDPDVIIDVRKGLADVRSAWIEARGDTERLEGLSSDFGQQRLNDAELAKLRFAHVRNPRRAKAGANVSQMHYARQGIITAEMEYVAIRENMKLQEARAAGLLNEQHAGHSFGANIPKEITPEFVRQEIARGRAIIPANINHPEVEPMIIGRNFLVKINGNIGNSALGSSIEEEVAKLTWGIRWGSDTVMDLSTGKHIHETREWIIRNSPVPIGTVPIYQALEKVNGVAEDLTWELFRDTLIEQAEQGVDYFTIHAGVLLRYVPLTAKRVTGIVSRGGSIMAKWCLAHHKENFLYTHFDEICEIMKAYDVSFSLGDGLRPGSIADANDAAQFGELETLGELTKIAWKHDVQCMIEGPGHVPMQLIKENMDKQLECCDEAPFYTLGPLTTDIAPGYDHITSGIGAAMIGWFGCAMLCYVTPKEHLGLPNKDDVKTGIITYKIAAHAADLAKGHPGAQIRDNALSKARFEFRWEDQFNLGLDPDTARAFHDETLPKESAKVAHFCSMCGPKFCSMKITQEVREYAAKIEAVDVTVEQGMREQAERFRQEGSQLYHKV.

The interval 1 to 22 (MTKQEKAINLSESAQVDQQSVQ) is disordered. Residues 10-22 (LSESAQVDQQSVQ) are compositionally biased toward polar residues. Residues Asn-232, Met-261, Tyr-290, His-326, 346–348 (SRG), 387–390 (DGLR), and Glu-426 each bind substrate. His-430 is a Zn(2+) binding site. Substrate is bound at residue Tyr-453. His-494 is a binding site for Zn(2+). [4Fe-4S] cluster-binding residues include Cys-574, Cys-577, and Cys-582.

It belongs to the ThiC family. Homodimer. [4Fe-4S] cluster is required as a cofactor.

The catalysed reaction is 5-amino-1-(5-phospho-beta-D-ribosyl)imidazole + S-adenosyl-L-methionine = 4-amino-2-methyl-5-(phosphooxymethyl)pyrimidine + CO + 5'-deoxyadenosine + formate + L-methionine + 3 H(+). It functions in the pathway cofactor biosynthesis; thiamine diphosphate biosynthesis. Catalyzes the synthesis of the hydroxymethylpyrimidine phosphate (HMP-P) moiety of thiamine from aminoimidazole ribotide (AIR) in a radical S-adenosyl-L-methionine (SAM)-dependent reaction. The protein is Phosphomethylpyrimidine synthase of Pseudomonas putida (strain ATCC 700007 / DSM 6899 / JCM 31910 / BCRC 17059 / LMG 24140 / F1).